We begin with the raw amino-acid sequence, 580 residues long: Dihydroxy-acid dehydratase (580 aa).

Residues 1–31 form a disordered region; it reads MPSGSSESPADALRASDSTPDIKPRSRDVTD. A compositionally biased stretch (basic and acidic residues) spans 20–31; it reads PDIKPRSRDVTD. Residue Cys69 coordinates [2Fe-2S] cluster. Asp101 serves as a coordination point for Mg(2+). Cys142 lines the [2Fe-2S] cluster pocket. Positions 143 and 144 each coordinate Mg(2+). Lys144 is modified (N6-carboxylysine). Cys219 serves as a coordination point for [2Fe-2S] cluster. Residue Glu470 participates in Mg(2+) binding. Ser496 serves as the catalytic Proton acceptor.

It belongs to the IlvD/Edd family. Homodimer. Requires [2Fe-2S] cluster as cofactor. It depends on Mg(2+) as a cofactor.

The enzyme catalyses (2R)-2,3-dihydroxy-3-methylbutanoate = 3-methyl-2-oxobutanoate + H2O. It catalyses the reaction (2R,3R)-2,3-dihydroxy-3-methylpentanoate = (S)-3-methyl-2-oxopentanoate + H2O. It participates in amino-acid biosynthesis; L-isoleucine biosynthesis; L-isoleucine from 2-oxobutanoate: step 3/4. Its pathway is amino-acid biosynthesis; L-valine biosynthesis; L-valine from pyruvate: step 3/4. Functionally, functions in the biosynthesis of branched-chain amino acids. Catalyzes the dehydration of (2R,3R)-2,3-dihydroxy-3-methylpentanoate (2,3-dihydroxy-3-methylvalerate) into 2-oxo-3-methylpentanoate (2-oxo-3-methylvalerate) and of (2R)-2,3-dihydroxy-3-methylbutanoate (2,3-dihydroxyisovalerate) into 2-oxo-3-methylbutanoate (2-oxoisovalerate), the penultimate precursor to L-isoleucine and L-valine, respectively. This Mycobacterium sp. (strain JLS) protein is Dihydroxy-acid dehydratase.